The primary structure comprises 163 residues: UPF0763 protein JJD26997_0796 (163 aa).

Belongs to the UPF0763 family.

The polypeptide is UPF0763 protein JJD26997_0796 (Campylobacter jejuni subsp. doylei (strain ATCC BAA-1458 / RM4099 / 269.97)).